The chain runs to 167 residues: Signal peptidase complex catalytic subunit SEC11 (167 aa).

Residues 1-6 are Cytoplasmic-facing; the sequence is MNIRQQ. The helical; Signal-anchor for type II membrane protein transmembrane segment at 7 to 24 threads the bilayer; that stretch reads LTKFLGLFLTLASAFMFW. The Lumenal portion of the chain corresponds to 25 to 167; the sequence is KGLSVVTNSH…LALSSLLGSE (143 aa). Residues S44, H83, and D109 each act as charge relay system in the active site. The tract at residues 153–164 is C-terminal short (CTS) helix; it reads ALMGMLALSSLL.

Belongs to the peptidase S26B family. As to quaternary structure, component of the signal peptidase complex (SPC) composed of a catalytic subunit SEC11 and three accessory subunits SPC1, SPC2 and SPC3. The complex induces a local thinning of the ER membrane which is used to measure the length of the signal peptide (SP) h-region of protein substrates. This ensures the selectivity of the complex towards h-regions shorter than 18-20 amino acids. SPC associates with the translocon complex.

The protein localises to the endoplasmic reticulum membrane. The catalysed reaction is Cleavage of hydrophobic, N-terminal signal or leader sequences from secreted and periplasmic proteins.. In terms of biological role, catalytic component of the signal peptidase complex (SPC) which catalyzes the cleavage of N-terminal signal sequences from nascent proteins as they are translocated into the lumen of the endoplasmic reticulum. Specifically cleaves N-terminal signal peptides that contain a hydrophobic alpha-helix (h-region) shorter than 18-20 amino acids. This chain is Signal peptidase complex catalytic subunit SEC11 (SEC11), found in Eremothecium gossypii (strain ATCC 10895 / CBS 109.51 / FGSC 9923 / NRRL Y-1056) (Yeast).